We begin with the raw amino-acid sequence, 436 residues long: 3-ketoacyl-CoA thiolase (436 aa).

The Acyl-thioester intermediate role is filled by C99. Residues H392 and C422 each act as proton acceptor in the active site.

It belongs to the thiolase-like superfamily. Thiolase family. Heterotetramer of two alpha chains (FadJ) and two beta chains (FadI).

Its subcellular location is the cytoplasm. The enzyme catalyses an acyl-CoA + acetyl-CoA = a 3-oxoacyl-CoA + CoA. The protein operates within lipid metabolism; fatty acid beta-oxidation. Its function is as follows. Catalyzes the final step of fatty acid oxidation in which acetyl-CoA is released and the CoA ester of a fatty acid two carbons shorter is formed. The protein is 3-ketoacyl-CoA thiolase of Escherichia coli O6:H1 (strain CFT073 / ATCC 700928 / UPEC).